A 610-amino-acid chain; its full sequence is Protein Spindly-B (610 aa).

A coiled-coil region spans residues 1–392 (MEESETVLKL…IDKVKDELSL (392 aa)). The tract at residues 474 to 610 (TEAHGVSDAT…KPATAQCPQQ (137 aa)) is disordered. 2 stretches are compositionally biased toward basic and acidic residues: residues 493-511 (SDDKKLPKEDLSLSTKDQD) and 535-548 (RIMEDEKDTPDLNK). Polar residues predominate over residues 549–561 (RNPNNCTITSIHP). The segment covering 570 to 583 (SELKKVDEEQEKRK) has biased composition (basic and acidic residues).

The protein belongs to the Spindly family.

The protein localises to the chromosome. It localises to the centromere. The protein resides in the kinetochore. Its function is as follows. Required for the localization of dynein and dynactin to the mitotic kintochore. Dynein is believed to control the initial lateral interaction between the kinetochore and spindle microtubules and to facilitate the subsequent formation of end-on kinetochore-microtubule attachments mediated by the NDC80 complex. The protein is Protein Spindly-B (spdl1-b) of Xenopus laevis (African clawed frog).